The chain runs to 493 residues: Glutamate--tRNA ligase (493 aa).

The short motif at 10–20 (PSPTGDPHVGT) is the 'HIGH' region element. The 'KMSKS' region motif lies at 251–255 (KLSKR). Lys-254 contacts ATP.

The protein belongs to the class-I aminoacyl-tRNA synthetase family. Glutamate--tRNA ligase type 1 subfamily. Monomer.

The protein resides in the cytoplasm. The enzyme catalyses tRNA(Glu) + L-glutamate + ATP = L-glutamyl-tRNA(Glu) + AMP + diphosphate. Catalyzes the attachment of glutamate to tRNA(Glu) in a two-step reaction: glutamate is first activated by ATP to form Glu-AMP and then transferred to the acceptor end of tRNA(Glu). The polypeptide is Glutamate--tRNA ligase (Pseudomonas putida (strain ATCC 47054 / DSM 6125 / CFBP 8728 / NCIMB 11950 / KT2440)).